Reading from the N-terminus, the 306-residue chain is Aspartate carbamoyltransferase catalytic subunit (306 aa).

Carbamoyl phosphate contacts are provided by Arg55 and Thr56. Lys84 is an L-aspartate binding site. Carbamoyl phosphate contacts are provided by Arg105, His133, and Gln136. The L-aspartate site is built by Arg166 and Arg227. Positions 265 and 266 each coordinate carbamoyl phosphate.

Belongs to the aspartate/ornithine carbamoyltransferase superfamily. ATCase family. As to quaternary structure, heterododecamer (2C3:3R2) of six catalytic PyrB chains organized as two trimers (C3), and six regulatory PyrI chains organized as three dimers (R2).

The catalysed reaction is carbamoyl phosphate + L-aspartate = N-carbamoyl-L-aspartate + phosphate + H(+). It participates in pyrimidine metabolism; UMP biosynthesis via de novo pathway; (S)-dihydroorotate from bicarbonate: step 2/3. Its function is as follows. Catalyzes the condensation of carbamoyl phosphate and aspartate to form carbamoyl aspartate and inorganic phosphate, the committed step in the de novo pyrimidine nucleotide biosynthesis pathway. The sequence is that of Aspartate carbamoyltransferase catalytic subunit from Neisseria gonorrhoeae (strain ATCC 700825 / FA 1090).